Here is a 450-residue protein sequence, read N- to C-terminus: FAD-linked oxidoreductase penO (450 aa).

Positions 32 to 203 (PPELPYAIVK…TRFFIRTRPA (172 aa)) constitute an FAD-binding PCMH-type domain.

Belongs to the oxygen-dependent FAD-linked oxidoreductase family. Requires FAD as cofactor.

Its pathway is secondary metabolite biosynthesis. In terms of biological role, FAD-linked oxidoreductase; part of the gene cluster that mediates the biosynthesis of the indole diterpenes penitrems. The geranylgeranyl diphosphate (GGPP) synthase penG catalyzes the first step in penitrem biosynthesis via conversion of farnesyl pyrophosphate and isopentyl pyrophosphate into geranylgeranyl pyrophosphate (GGPP). Condensation of indole-3-glycerol phosphate with GGPP by the prenyl transferase penC then forms 3-geranylgeranylindole (3-GGI). Epoxidation by the FAD-dependent monooxygenase penM leads to a epoxidized-GGI that is substrate of the terpene cyclase penB for cyclization to yield paspaline. Paspaline is subsequently converted to 13-desoxypaxilline by the cytochrome P450 monooxygenase penP, the latter being then converted to paxilline by the cytochrome P450 monooxygenase penQ. Paxilline is converted to beta-paxitriol via C-10 ketoreduction by the short-chain dehydrogenase PC-15 which can be monoprenylated at the C-20 by the indole diterpene prenyltransferase penD. A two-step elimination (acetylation and elimination) process performed by the O-acetyltransferase PC-16 and the P.simplicissimum ptmI-ortholog not yet identified in P.crustosum, leads to the production of the prenylated form of penijanthine. The FAD-linked oxidoreductase ptmO then converts the prenylated form of penijanthine into PC-M5 which is in turn transformed into PC-M4 by the aromatic dimethylallyltransferase PC-22. A series of oxidation steps involving 4 cytochrome P450 monooxygenases (PC-21, PC-05, PC-23, PC-20) and a FAD-dependent monooxygenase (PC-14) are required for the transformation of PC-M4 to penitrems A and E. Synthesis of these final products is proposed to proceed via penitrems D and C (PC-21, PC-05, PC-14) and penitrems B and F (PC-21, PC-05, PC-14, PC-23). This is FAD-linked oxidoreductase penO from Penicillium crustosum (Blue mold fungus).